Here is a 422-residue protein sequence, read N- to C-terminus: MIQNNPKSIGSSSNKSARSSGSRQNILKMIQFENQRLHEYYNDFSSLKETILTAPSIVEYLFQKPSMKYDTIEKIYKLFTDPKSNYLENYTNITRVTKYISDYLFADMIELIELQDKYHVCNDNYNYYVDMILKNRNKYPKYTYLSQRYTPLIQTIGDTLDNIQLVEKYVDDDGAKISIKYEISWIYNWTFKNDCKYNLDIPFVFDFFVVLVYRERLILFVIEVDRDINNPLYHTESIIKQIILFQMNVFVLRISQQHLKDNLKKRIIRFIKNAVSSKVYLSEKYITPNINLIDMDLVKLELEKFYQSYKCCNSYYHKSLLDNSTIYPDPIKNKFHNGRNMGITLKTDKIYNKDDDEYFDTLIGTKFTREPDIPIVVTDDVFDWIINKCPKEPSKKQYSERKISEKQQKYNDICISLVGKII.

A disordered region spans residues 1–22; it reads MIQNNPKSIGSSSNKSARSSGS. The span at 7–22 shows a compositional bias: low complexity; it reads KSIGSSSNKSARSSGS.

This is an uncharacterized protein from Acanthamoeba polyphaga mimivirus (APMV).